We begin with the raw amino-acid sequence, 841 residues long: MLRLPLVLVWSLWASLTVAENGLNGWLRYAPIPCDGRCHKALPSRIVALNSTQGSPLETAIEELQTGVRGMTGKRLSVAKENNCNLHATALIATVEEYRRTCRNSSDIPDLDVDGFWLRTEGNNVQILGQSERGALYGAFEYLSMLAQGDFSSVDYSTSPHAPVRWVNQWDNMDGSIERGYAGPSIFFAQGQIVPDLSRAKQYARLLASVRINGIIVNNVNANATLLTPQNMDGLARIANVFRPYGIRIGIALNFASPDTLGGLGTYDPLDPSVISWWGNITDSLYERIPDMAGYLVKASSEGQPGPDTYNRTLADGANLFARALKPHGGVMMFRAFVYDHHINESIWTNDRANAQVDFFKKLDGQFEDNVIVQIKYGPIDFQVREPVSPLFANLYHTNTAIELQVTQEYLGQQCHLVYLPPLWKTITDFDLRVDHSPSVVRDIISGERFNRPLGGWAAVVNVGTNDTWLGSHLSMSNLYAYGRMAWSPTDDSVEILQDWIRLTFGRDQHVLDTITDMSMASWPAYENYTGNLGIQTLTDILYTHYGPNPASQDGNGWGQWTRADHDSIGMDRTVKNGTGNAGQYPAEIAEIYEDIDKTPDDLLLWFHHVPYTHRLDSGKTVIQHFYDAHYAGAETAQGFVPQWESLRGRIDPERYDAMRTRLVYQAGHSIVWRDAINNFYWNLSGIADTNGRVGHHPWRVEAESMQLQGYQPYAVSPFETASNYTAVVTTSNSTTGTASTTLDFPSGTYDVGVNYFDMYGGKSRWSLYLNDKVVGKWEGNSEDVLGHTPSIYLDGHSAIRITFNGVKVRKGDRLKIVGVPDGVEPAPLDYVVFLPQGVID.

The signal sequence occupies residues 1-19 (MLRLPLVLVWSLWASLTVA). Residues Asn50, Asn104, Asn223, Asn280, Asn311, Asn344, Asn466, Asn528, Asn577, Asn683, Asn724, and Asn733 are each glycosylated (N-linked (GlcNAc...) asparagine).

Belongs to the glycosyl hydrolase 67 family.

The protein resides in the secreted. It carries out the reaction an alpha-D-glucuronoside + H2O = D-glucuronate + an alcohol. Its function is as follows. Alpha-glucuronidase involved in the hydrolysis of xylan, a major structural heterogeneous polysaccharide found in plant biomass representing the second most abundant polysaccharide in the biosphere, after cellulose. Releases 4-O-methylglucuronic acid from xylan. This is Probable alpha-glucuronidase A (aguA) from Aspergillus terreus (strain NIH 2624 / FGSC A1156).